A 556-amino-acid polypeptide reads, in one-letter code: Formate--tetrahydrofolate ligase (556 aa).

65 to 72 (TPAGEGKS) contacts ATP.

Belongs to the formate--tetrahydrofolate ligase family.

The enzyme catalyses (6S)-5,6,7,8-tetrahydrofolate + formate + ATP = (6R)-10-formyltetrahydrofolate + ADP + phosphate. It participates in one-carbon metabolism; tetrahydrofolate interconversion. This is Formate--tetrahydrofolate ligase from Streptococcus thermophilus (strain ATCC BAA-250 / LMG 18311).